The chain runs to 325 residues: Quinolinate synthase (325 aa).

Iminosuccinate-binding residues include His41 and Ser58. Cys103 is a binding site for [4Fe-4S] cluster. Iminosuccinate contacts are provided by residues 129–131 and Ser146; that span reads YIN. Cys189 contacts [4Fe-4S] cluster. Iminosuccinate is bound by residues 215–217 and Thr232; that span reads HPE. Cys282 contacts [4Fe-4S] cluster.

It belongs to the quinolinate synthase family. Type 2 subfamily. It depends on [4Fe-4S] cluster as a cofactor.

Its subcellular location is the cytoplasm. It catalyses the reaction iminosuccinate + dihydroxyacetone phosphate = quinolinate + phosphate + 2 H2O + H(+). Its pathway is cofactor biosynthesis; NAD(+) biosynthesis; quinolinate from iminoaspartate: step 1/1. Its function is as follows. Catalyzes the condensation of iminoaspartate with dihydroxyacetone phosphate to form quinolinate. This is Quinolinate synthase from Rippkaea orientalis (strain PCC 8801 / RF-1) (Cyanothece sp. (strain PCC 8801)).